Here is a 310-residue protein sequence, read N- to C-terminus: Ribose-phosphate pyrophosphokinase (310 aa).

ATP-binding positions include 34–36 and 93–94; these read DQE and RQ. Mg(2+) contacts are provided by H127 and D167. K190 is an active-site residue. D-ribose 5-phosphate contacts are provided by residues R192, D216, and 220-224; that span reads DSGGT.

This sequence belongs to the ribose-phosphate pyrophosphokinase family. Class I subfamily. Homohexamer. It depends on Mg(2+) as a cofactor.

It is found in the cytoplasm. It catalyses the reaction D-ribose 5-phosphate + ATP = 5-phospho-alpha-D-ribose 1-diphosphate + AMP + H(+). It functions in the pathway metabolic intermediate biosynthesis; 5-phospho-alpha-D-ribose 1-diphosphate biosynthesis; 5-phospho-alpha-D-ribose 1-diphosphate from D-ribose 5-phosphate (route I): step 1/1. Its function is as follows. Involved in the biosynthesis of the central metabolite phospho-alpha-D-ribosyl-1-pyrophosphate (PRPP) via the transfer of pyrophosphoryl group from ATP to 1-hydroxyl of ribose-5-phosphate (Rib-5-P). The chain is Ribose-phosphate pyrophosphokinase from Agrobacterium fabrum (strain C58 / ATCC 33970) (Agrobacterium tumefaciens (strain C58)).